Here is a 249-residue protein sequence, read N- to C-terminus: Ribonuclease PH (249 aa).

Phosphate is bound by residues Arg-90 and 128-130 (GTR).

It belongs to the RNase PH family. In terms of assembly, homohexameric ring arranged as a trimer of dimers.

The enzyme catalyses tRNA(n+1) + phosphate = tRNA(n) + a ribonucleoside 5'-diphosphate. In terms of biological role, phosphorolytic 3'-5' exoribonuclease that plays an important role in tRNA 3'-end maturation. Removes nucleotide residues following the 3'-CCA terminus of tRNAs; can also add nucleotides to the ends of RNA molecules by using nucleoside diphosphates as substrates, but this may not be physiologically important. Probably plays a role in initiation of 16S rRNA degradation (leading to ribosome degradation) during starvation. The protein is Ribonuclease PH of Parasynechococcus marenigrum (strain WH8102).